Here is a 103-residue protein sequence, read N- to C-terminus: Large ribosomal subunit protein bL21 (103 aa).

It belongs to the bacterial ribosomal protein bL21 family. Part of the 50S ribosomal subunit. Contacts protein L20.

In terms of biological role, this protein binds to 23S rRNA in the presence of protein L20. The sequence is that of Large ribosomal subunit protein bL21 from Rhodococcus erythropolis (strain PR4 / NBRC 100887).